The sequence spans 309 residues: Protein FdhE homolog (309 aa).

It belongs to the FdhE family.

Its subcellular location is the cytoplasm. Its function is as follows. Necessary for formate dehydrogenase activity. This is Protein FdhE homolog from Pseudomonas aeruginosa (strain ATCC 15692 / DSM 22644 / CIP 104116 / JCM 14847 / LMG 12228 / 1C / PRS 101 / PAO1).